Consider the following 375-residue polypeptide: Homeobox protein Meis3 (375 aa).

Residues 25-51 (PETVPAVPGPYGPHRPPQPLPPGLDSD) are disordered. Positions 31–46 (VPGPYGPHRPPQPLPP) are enriched in pro residues. The 84-residue stretch at 96–179 (GGDVCSSDSF…PIDLVIEDRD (84 aa)) folds into the MEIS N-terminal domain. Disordered stretches follow at residues 197-268 (PDQN…KRGI) and 329-348 (NRTG…GGYT). Residues 227 to 241 (SQSGDNSSDQGDGLD) show a composition bias toward low complexity. Positions 262 to 324 (RNKKRGIFPK…NARRRIVQPM (63 aa)) form a DNA-binding region, homeobox; TALE-type.

This sequence belongs to the TALE/MEIS homeobox family.

Its subcellular location is the nucleus. Transcriptional regulator which directly modulates PDPK1 expression, thus promoting survival of pancreatic beta-cells. Also regulates expression of NDFIP1, BNIP3, and CCNG1. This chain is Homeobox protein Meis3 (MEIS3), found in Homo sapiens (Human).